Reading from the N-terminus, the 105-residue chain is Nitrogen fixation nifHD1 region GlnB-like protein 1 (105 aa).

Belongs to the P(II) protein family.

Its function is as follows. Could be involved in the regulation of nitrogen fixation. This chain is Nitrogen fixation nifHD1 region GlnB-like protein 1 (glnBA), found in Methanosarcina barkeri.